The chain runs to 126 residues: Large ribosomal subunit protein bL20c (126 aa).

Belongs to the bacterial ribosomal protein bL20 family.

The protein resides in the plastid. The protein localises to the chloroplast. Functionally, binds directly to 23S ribosomal RNA and is necessary for the in vitro assembly process of the 50S ribosomal subunit. It is not involved in the protein synthesizing functions of that subunit. The polypeptide is Large ribosomal subunit protein bL20c (Illicium oligandrum (Star anise)).